We begin with the raw amino-acid sequence, 310 residues long: Retrotransposon Gag-like protein 4 (310 aa).

The segment at 278–295 (QLCLYCSQSGHFTRDCLA) adopts a CCHC-type zinc-finger fold.

Its function is as follows. Involved in cognitive function in the brain, possibly via the noradrenergic system. In Homo sapiens (Human), this protein is Retrotransposon Gag-like protein 4.